The following is a 105-amino-acid chain: MAHDLPQERILVVLISDFELSPDELAALLAALRPRPVLSVWLRDSGFDAPSPRLGLAELCDPETGRRRTVLTTPRWAARQAQLLRDRQAALRRILAEHGLSPIEI.

This is an uncharacterized protein from Paracoccus denitrificans.